Consider the following 404-residue polypeptide: MKYTEIMVRYGELSTKGKNRKTFIMQLAQNVKRALADFPALKIHADRDRMHILLNGEDSEEVIPKLSKVFGIQNFSPSIRIEKEMPAIRAMVQEVVREVYTPGKTFKITAKRSDHSFELDSNGLNQELGGAVIEAIPEIQVQMKKPDINLRIEIRKDAAYLSYETIRGAGGLPVGTSGRGMLMLSGGIDSPVAGYLAMKRGVEVEAVHFASPPYTSEQALQKAKDLAEKLVPYVGTIQFIEVPFTEIQEEIKRVVPQGYLMTITRRLMLRLTDAIREMRKGLVIINGESLAQVASQTLQSMVAINEVTSTPIIRPVVSMDKTEIIEIAEKIDTFELAIQPFEDCCTIFAPPQPKTRPRLDKAQEYEARLDLEGLMARALEGLKITEISAETAKDKQEDEFADFL.

Positions 60–165 (EEVIPKLSKV…KDAAYLSYET (106 aa)) constitute a THUMP domain. Residues 183–184 (ML), 208–209 (HF), Arg-265, Gly-287, and Gln-296 contribute to the ATP site.

This sequence belongs to the ThiI family.

Its subcellular location is the cytoplasm. It catalyses the reaction [ThiI sulfur-carrier protein]-S-sulfanyl-L-cysteine + a uridine in tRNA + 2 reduced [2Fe-2S]-[ferredoxin] + ATP + H(+) = [ThiI sulfur-carrier protein]-L-cysteine + a 4-thiouridine in tRNA + 2 oxidized [2Fe-2S]-[ferredoxin] + AMP + diphosphate. The catalysed reaction is [ThiS sulfur-carrier protein]-C-terminal Gly-Gly-AMP + S-sulfanyl-L-cysteinyl-[cysteine desulfurase] + AH2 = [ThiS sulfur-carrier protein]-C-terminal-Gly-aminoethanethioate + L-cysteinyl-[cysteine desulfurase] + A + AMP + 2 H(+). Its pathway is cofactor biosynthesis; thiamine diphosphate biosynthesis. Its function is as follows. Catalyzes the ATP-dependent transfer of a sulfur to tRNA to produce 4-thiouridine in position 8 of tRNAs, which functions as a near-UV photosensor. Also catalyzes the transfer of sulfur to the sulfur carrier protein ThiS, forming ThiS-thiocarboxylate. This is a step in the synthesis of thiazole, in the thiamine biosynthesis pathway. The sulfur is donated as persulfide by IscS. The sequence is that of Probable tRNA sulfurtransferase from Enterococcus faecalis (strain ATCC 700802 / V583).